The following is a 128-amino-acid chain: Transcription antitermination protein NusB (128 aa).

This sequence belongs to the NusB family.

Its function is as follows. Involved in transcription antitermination. Required for transcription of ribosomal RNA (rRNA) genes. Binds specifically to the boxA antiterminator sequence of the ribosomal RNA (rrn) operons. The sequence is that of Transcription antitermination protein NusB from Staphylococcus haemolyticus (strain JCSC1435).